The chain runs to 366 residues: tRNA(Met) cytidine acetate ligase (366 aa).

Residues 7–20 (IAEF…HQYL), G96, N152, and R175 each bind ATP.

The protein belongs to the TmcAL family.

It localises to the cytoplasm. The catalysed reaction is cytidine(34) in elongator tRNA(Met) + acetate + ATP = N(4)-acetylcytidine(34) in elongator tRNA(Met) + AMP + diphosphate. In terms of biological role, catalyzes the formation of N(4)-acetylcytidine (ac(4)C) at the wobble position of elongator tRNA(Met), using acetate and ATP as substrates. First activates an acetate ion to form acetyladenylate (Ac-AMP) and then transfers the acetyl group to tRNA to form ac(4)C34. The sequence is that of tRNA(Met) cytidine acetate ligase from Streptococcus equi subsp. zooepidemicus (strain MGCS10565).